Consider the following 156-residue polypeptide: Ribosomal RNA large subunit methyltransferase H (156 aa).

S-adenosyl-L-methionine contacts are provided by residues Leu73, Gly104, and 123-128; that span reads LSALTL.

It belongs to the RNA methyltransferase RlmH family. As to quaternary structure, homodimer.

It is found in the cytoplasm. The enzyme catalyses pseudouridine(1915) in 23S rRNA + S-adenosyl-L-methionine = N(3)-methylpseudouridine(1915) in 23S rRNA + S-adenosyl-L-homocysteine + H(+). Specifically methylates the pseudouridine at position 1915 (m3Psi1915) in 23S rRNA. This is Ribosomal RNA large subunit methyltransferase H from Shewanella putrefaciens (strain CN-32 / ATCC BAA-453).